Reading from the N-terminus, the 353-residue chain is Histidinol-phosphate aminotransferase (353 aa).

Lysine 209 carries the N6-(pyridoxal phosphate)lysine modification.

The protein belongs to the class-II pyridoxal-phosphate-dependent aminotransferase family. Histidinol-phosphate aminotransferase subfamily. In terms of assembly, homodimer. Requires pyridoxal 5'-phosphate as cofactor.

The enzyme catalyses L-histidinol phosphate + 2-oxoglutarate = 3-(imidazol-4-yl)-2-oxopropyl phosphate + L-glutamate. It participates in amino-acid biosynthesis; L-histidine biosynthesis; L-histidine from 5-phospho-alpha-D-ribose 1-diphosphate: step 7/9. The protein is Histidinol-phosphate aminotransferase of Buchnera aphidicola subsp. Cinara cedri (strain Cc).